The following is a 1142-amino-acid chain: Enamelin (1142 aa).

The N-terminal stretch at 1–39 (MLVLRCRLGTSFPKLDNLVPKGKMKILLVFLGLLGNSVA) is a signal peptide. Disordered stretches follow at residues 88–193 (QYQM…ISNE), 214–326 (YYSE…PNIR), 398–671 (PANL…QNRW), 874–955 (CCAG…LRRN), 1020–1048 (VIGT…QQQR), and 1062–1092 (LAKH…PTEN). A compositionally biased stretch (basic residues) spans 103 to 114 (HPRKSSAPKRHN). N-linked (GlcNAc...) asparagine glycans are attached at residues asparagine 114 and asparagine 126. The span at 117–128 (DQTQETQKPNQT) shows a compositional bias: polar residues. Low complexity predominate over residues 140-162 (KQPSHNQPQPEEEAQPPQAFPPF). Residues 170 to 186 (QQPPWQIPQRLPPPGYG) are compositionally biased toward pro residues. Serine 191 and serine 216 each carry phosphoserine. The segment covering 223 to 234 (DFEKPKEEDPPK) has biased composition (basic and acidic residues). Polar residues predominate over residues 240 to 285 (TEPTANSTVTETNSTQPNPKGSQGGNDTSPTGNSTPGLNTGNNPPA). N-linked (GlcNAc...) asparagine glycosylation is found at asparagine 245, asparagine 252, asparagine 265, and asparagine 296. Positions 429-442 (RNEKIQNPKEKPLG) are enriched in basic and acidic residues. Polar residues-rich tracts occupy residues 452 to 470 (KNPT…NKSN), 507 to 516 (SDGQTQSQNL), and 531 to 544 (SETN…SSYQ). Asparagine 467 carries N-linked (GlcNAc...) asparagine glycosylation. Asparagine 534 carries N-linked (GlcNAc...) asparagine glycosylation. A compositionally biased stretch (basic and acidic residues) spans 556-588 (AKEHFPAGRNTWDHQEISPPFKEDPGRQEEHLP). The span at 652 to 661 (NEEDPVDPTG) shows a compositional bias: acidic residues. A compositionally biased stretch (polar residues) spans 924 to 934 (SPTSILPGQRN). Residue asparagine 934 is glycosylated (N-linked (GlcNAc...) asparagine). The span at 935–951 (SSEKRESQNPFRDDVST) shows a compositional bias: basic and acidic residues. Asparagine 1040 is a glycosylation site (N-linked (GlcNAc...) asparagine). Positions 1068-1078 (STTGTPSSDGR) are enriched in polar residues.

In terms of processing, phosphorylated by FAM20C in vitro. Expressed in tooth particularly in odontoblast, ameloblast and cementoblast.

Its subcellular location is the secreted. It localises to the extracellular space. The protein localises to the extracellular matrix. Functionally, involved in the mineralization and structural organization of enamel. Involved in the extension of enamel during the secretory stage of dental enamel formation. In Homo sapiens (Human), this protein is Enamelin (ENAM).